The chain runs to 296 residues: Tubulin polyglutamylase complex subunit 2 (296 aa).

Residues serine 254–glycine 265 show a composition bias toward basic residues. The interval serine 254–lysine 296 is disordered. Positions lysine 285–lysine 296 are enriched in low complexity.

Part of the neuronal tubulin polyglutamylase complex which contains TPGS1, TPGS2, TTLL1, LRRC49 and NICN1. Interacts with CSTPP1 and LRRC49.

It localises to the cytoplasm. It is found in the cytoskeleton. The protein resides in the microtubule organizing center. The protein localises to the centrosome. Its subcellular location is the centriolar satellite. Functionally, subunit of the tubulin polyglutamylase complex (TPGC). The complex mediates cilia and flagella polyglutamylation which is essential for their biogenesis and motility. This chain is Tubulin polyglutamylase complex subunit 2 (Tpgs2), found in Mus musculus (Mouse).